A 240-amino-acid chain; its full sequence is 26.7 kDa heat shock protein, chloroplastic (240 aa).

The transit peptide at 1–43 (MAAPFALVSRVSPAARLPIRAAWRRARPTVGLPSSGRARQLAV) directs the protein to the chloroplast. The tract at residues 59–84 (HVNQDGGNQQGNAVQRRPRRSSALDG) is disordered. The region spanning 126–240 (LATGEVRMPW…ERKVIDVQVQ (115 aa)) is the sHSP domain.

This sequence belongs to the small heat shock protein (HSP20) family. In terms of assembly, may form oligomeric structures. In terms of tissue distribution, expressed in roots, stems, leaves, spikelets and embryos.

The protein resides in the plastid. The protein localises to the chloroplast. In Oryza sativa subsp. japonica (Rice), this protein is 26.7 kDa heat shock protein, chloroplastic (HSP26.7).